A 150-amino-acid chain; its full sequence is Ribonuclease H (150 aa).

The region spanning 1 to 146 (MPELFAYTDG…ADELARAGMA (146 aa)) is the RNase H type-1 domain. Mg(2+)-binding residues include Asp-9, Glu-52, Asp-74, and Asp-138.

This sequence belongs to the RNase H family. Monomer. The cofactor is Mg(2+).

The protein resides in the cytoplasm. The catalysed reaction is Endonucleolytic cleavage to 5'-phosphomonoester.. Functionally, endonuclease that specifically degrades the RNA of RNA-DNA hybrids. The sequence is that of Ribonuclease H from Roseobacter denitrificans (strain ATCC 33942 / OCh 114) (Erythrobacter sp. (strain OCh 114)).